The primary structure comprises 419 residues: O-methyltransferase gsfB (419 aa).

S-adenosyl-L-methionine is bound by residues 255-256 (GG), Asp-278, 300-301 (DF), and Arg-316. His-320 serves as the catalytic Proton acceptor.

It belongs to the class I-like SAM-binding methyltransferase superfamily. Cation-independent O-methyltransferase family.

The catalysed reaction is 2-(2,4-dihydroxy-6-oxidobenzoyl)-5-hydroxy-3-methylbenzenolate + S-adenosyl-L-methionine = griseophenone D + S-adenosyl-L-homocysteine + H(+). Its pathway is secondary metabolite biosynthesis; terpenoid biosynthesis. Its function is as follows. O-methyltransferase; part of the gene cluster that mediates the biosynthesis of griseofulvin, an important antifungal drug that has been in use for a long time for treating dermatophyte infections. The first step of the pathway is the formation of the heptaketide backbone by gsfA which is initiated by priming with acetyl-CoA, followed by sequential condensations of 6 malonyl-CoA units. The resulting benzophenone can undergo a spontaneous dehydration to form norlichexanthone. However, the true precursor for the griseofulvin biosynthesis is not norlichexanthone, but the heptaketide benzophenone that is O-methylated at 3-OH by gsfB to produce griseophenone D which is further methylated at 9-OH by gsfC to yield griseophenone C. Griseophenone C is then substrate of halogenase gsfI which is responsible for the regio-specific chlorination at the C13 position to form griseophenone B. The cytochrome P450 gsfF catalyzes the coupling of orcinol and phloroglucinol rings in griseophenone B to form desmethyl-dehydrogriseofulvin A which is further methylated at 5-OH by gsfD to yield dehydrogriseofulvin. Finally, gsfE performs stereospecific reduction of enone 18 of dehydrogriseofulvin to afford the final product griseofulvin. This chain is O-methyltransferase gsfB, found in Penicillium aethiopicum.